A 1342-amino-acid chain; its full sequence is DNA-directed RNA polymerase subunit beta (1342 aa).

It belongs to the RNA polymerase beta chain family. As to quaternary structure, the RNAP catalytic core consists of 2 alpha, 1 beta, 1 beta' and 1 omega subunit. When a sigma factor is associated with the core the holoenzyme is formed, which can initiate transcription.

It carries out the reaction RNA(n) + a ribonucleoside 5'-triphosphate = RNA(n+1) + diphosphate. DNA-dependent RNA polymerase catalyzes the transcription of DNA into RNA using the four ribonucleoside triphosphates as substrates. The sequence is that of DNA-directed RNA polymerase subunit beta from Enterobacter sp. (strain 638).